The primary structure comprises 249 residues: MFTLRRKKQDIKLSKIPAHIGIIMDGNGRWAKKRMKPRVFGHKAGMDALQDVTIAASELGVKILTVYAFSTENWARPQEEVKFIMNLPVEFFDKYVPKLHKNNVRILVIGDKEELPAATLDALERARELTKHNSGLILNFALNYGGRAEIVDAVKLIAQDVLDARFNPGDITEGLIADYLMTSNLPYLYRDPDLIIRTSGELRLSNFLPWQAAYSELYFTDTLWPDFDKKALYLAIEEFNHRHRRFGGV.

Residue Asp25 is part of the active site. Asp25 provides a ligand contact to Mg(2+). Residues 26 to 29 (GNGR), Trp30, Arg38, His42, and 70 to 72 (STE) contribute to the substrate site. Asn73 (proton acceptor) is an active-site residue. Substrate-binding positions include Trp74, Arg76, Arg197, and 203–205 (RLS). Glu216 is a Mg(2+) binding site.

The protein belongs to the UPP synthase family. Homodimer. Requires Mg(2+) as cofactor.

In terms of biological role, catalyzes the condensation of isopentenyl diphosphate (IPP) with allylic pyrophosphates generating different type of terpenoids. The chain is Isoprenyl transferase from Streptococcus mutans serotype c (strain ATCC 700610 / UA159).